Here is an 84-residue protein sequence, read N- to C-terminus: MSILSFLLGEKKKSASVAKERLQIILAHERSGHSAPADYLPALQRELVAVISKYVKISDQDLRVSLERQDNLEVLEVKIEIPQA.

The protein belongs to the MinE family.

Prevents the cell division inhibition by proteins MinC and MinD at internal division sites while permitting inhibition at polar sites. This ensures cell division at the proper site by restricting the formation of a division septum at the midpoint of the long axis of the cell. In Cupriavidus metallidurans (strain ATCC 43123 / DSM 2839 / NBRC 102507 / CH34) (Ralstonia metallidurans), this protein is Cell division topological specificity factor.